We begin with the raw amino-acid sequence, 503 residues long: MVLVLDFGSQYTRLIARRLRELRAFSLILPGDAPLEEVLKHRPQALILSGGPRSVFDPDAPRPDPRLFSSGLPLLGICYGMQLLAQELGGRVERAGRAEYGKALLTRHEGPLFRGLEGEVQVWMSHQDAVTAPPPGWRVVAETEENPVAAIASPDGRAYGVQFHPEVAHTPKGMQILENFLELAGAKRDWTPEHVLEELLREVRERAGKDRVLLAVSGGVDSSTLALLLAKAGVDHLAVFVDHGLLRLGEREEVEGALRALGVNLLVVDAKERFLKALKGVEDPEEKRKIIGREFVAAFSQVARERGPFRFLAQGTLYPDVIESAGGHGAAKIKSHHNVGGLPEDLEFELLEPFRLLFKDEVRELALLLGLPDTLRLRHPFPGPGLAVRVLGEVTEERLEILRRADDIFTSLLREWGLYEKVAQALAVLTPVRSVGVAGDERKYGYVLALRAVTTEDFMTADWARLPLEFLDEAARRITRRVPEIGRVVYDLTSKPPATIEWE.

Residues Met-1–Asp-189 enclose the Glutamine amidotransferase type-1 domain. Cys-78 (nucleophile) is an active-site residue. Catalysis depends on residues His-164 and Glu-166. The GMPS ATP-PPase domain maps to Trp-190–Arg-378. Ser-217–Ser-223 is a binding site for ATP.

As to quaternary structure, homodimer.

The catalysed reaction is XMP + L-glutamine + ATP + H2O = GMP + L-glutamate + AMP + diphosphate + 2 H(+). Its pathway is purine metabolism; GMP biosynthesis; GMP from XMP (L-Gln route): step 1/1. Functionally, catalyzes the synthesis of GMP from XMP. The chain is GMP synthase [glutamine-hydrolyzing] from Thermus thermophilus (strain ATCC BAA-163 / DSM 7039 / HB27).